The chain runs to 230 residues: uncharacterized protein (230 aa).

Residues M1–R16 form the signal peptide. Transmembrane regions (helical) follow at residues V27–I47, L118–F138, F150–L170, and S172–F191.

It is found in the cytoplasm. The protein resides in the nucleus membrane. This is an uncharacterized protein from Schizosaccharomyces pombe (strain 972 / ATCC 24843) (Fission yeast).